The chain runs to 261 residues: Cobalt transport protein CbiM (261 aa).

An N-terminal signal peptide occupies residues 1 to 33 (MLRRVLASKRASLILMGMLSFYIIVSASAPAYA). 7 helical membrane passes run 41 to 61 (LPAG…LLGV), 76 to 96 (LLLA…LPSV), 108 to 128 (LGSV…VLLF), 140 to 160 (TLGA…YWIY), 172 to 192 (IAIF…TSVQ), 197 to 217 (FPAP…IFAI), and 220 to 240 (IPLA…LQSY).

It belongs to the CbiM family. As to quaternary structure, forms an energy-coupling factor (ECF) transporter complex composed of an ATP-binding protein (A component, CbiO), a transmembrane protein (T component, CbiQ) and 2 possible substrate-capture proteins (S components, CbiM and CbiN) of unknown stoichimetry.

It localises to the cell inner membrane. It functions in the pathway cofactor biosynthesis; adenosylcobalamin biosynthesis. In terms of biological role, part of the energy-coupling factor (ECF) transporter complex CbiMNOQ involved in cobalt import. This is Cobalt transport protein CbiM from Nostoc sp. (strain PCC 7120 / SAG 25.82 / UTEX 2576).